Here is an 86-residue protein sequence, read N- to C-terminus: U15-lycotoxin-Ls1g (86 aa).

The signal sequence occupies residues 1–20; that stretch reads MNSKIFAVLLLLGLLSCVLS. A WAP domain is found at 21 to 66; it reads DQYCPKSSITACKKMNIRNDCCKDDDCTGGSWCCATPCGNFCKYPA. 5 disulfides stabilise this stretch: Cys24-Cys54, Cys32-Cys58, Cys41-Cys53, Cys42-Cys80, and Cys47-Cys62.

This sequence belongs to the venom protein 11 family. 01 (wap-1) subfamily. Post-translationally, contains 5 disulfide bonds. In terms of tissue distribution, expressed by the venom gland.

It is found in the secreted. Functionally, has antibacterial activity. This Lycosa singoriensis (Wolf spider) protein is U15-lycotoxin-Ls1g.